A 497-amino-acid chain; its full sequence is Anthranilate synthase component 1 (497 aa).

Residues Ser-49 and 271 to 273 (PYL) contribute to the L-tryptophan site. Residue 312–313 (GT) participates in chorismate binding. Position 339 (Glu-339) interacts with Mg(2+). Residues Arg-447, 461–463 (GAG), and Gly-463 contribute to the chorismate site. Glu-476 provides a ligand contact to Mg(2+).

It belongs to the anthranilate synthase component I family. As to quaternary structure, heterotetramer consisting of two non-identical subunits: a beta subunit (TrpG) and a large alpha subunit (TrpE). Requires Mg(2+) as cofactor.

The catalysed reaction is chorismate + L-glutamine = anthranilate + pyruvate + L-glutamate + H(+). It functions in the pathway amino-acid biosynthesis; L-tryptophan biosynthesis; L-tryptophan from chorismate: step 1/5. With respect to regulation, feedback inhibited by tryptophan. Its function is as follows. Part of a heterotetrameric complex that catalyzes the two-step biosynthesis of anthranilate, an intermediate in the biosynthesis of L-tryptophan. In the first step, the glutamine-binding beta subunit (TrpG) of anthranilate synthase (AS) provides the glutamine amidotransferase activity which generates ammonia as a substrate that, along with chorismate, is used in the second step, catalyzed by the large alpha subunit of AS (TrpE) to produce anthranilate. In the absence of TrpG, TrpE can synthesize anthranilate directly from chorismate and high concentrations of ammonia. The protein is Anthranilate synthase component 1 (trpE) of Acinetobacter calcoaceticus.